A 585-amino-acid polypeptide reads, in one-letter code: Testis-specific serine kinase substrate (585 aa).

Residues E91 to A108 are compositionally biased toward low complexity. The interval E91–D126 is disordered. S224, S281, and S309 each carry phosphoserine. 2 disordered regions span residues S262 to S309 and L559 to Q585.

Post-translationally, phosphorylated on serine residue(s) by STK22A/TSSK1 and STK22B/TSSK2.

The protein localises to the cytoplasm. It localises to the cytoskeleton. The protein resides in the microtubule organizing center. Its subcellular location is the centrosome. It is found in the centriole. Its function is as follows. May play a role in testicular physiology, most probably in the process of spermatogenesis or spermatid development. This is Testis-specific serine kinase substrate (Tsks) from Rattus norvegicus (Rat).